Here is a 220-residue protein sequence, read N- to C-terminus: Deoxyribose-phosphate aldolase (220 aa).

Asp-89 acts as the Proton donor/acceptor in catalysis. Catalysis depends on Lys-151, which acts as the Schiff-base intermediate with acetaldehyde. Lys-180 acts as the Proton donor/acceptor in catalysis.

The protein belongs to the DeoC/FbaB aldolase family. DeoC type 1 subfamily.

The protein localises to the cytoplasm. It catalyses the reaction 2-deoxy-D-ribose 5-phosphate = D-glyceraldehyde 3-phosphate + acetaldehyde. It participates in carbohydrate degradation; 2-deoxy-D-ribose 1-phosphate degradation; D-glyceraldehyde 3-phosphate and acetaldehyde from 2-deoxy-alpha-D-ribose 1-phosphate: step 2/2. Functionally, catalyzes a reversible aldol reaction between acetaldehyde and D-glyceraldehyde 3-phosphate to generate 2-deoxy-D-ribose 5-phosphate. The protein is Deoxyribose-phosphate aldolase of Mycoplasmopsis pulmonis (strain UAB CTIP) (Mycoplasma pulmonis).